The sequence spans 424 residues: Tyrosine--tRNA ligase (424 aa).

L-tyrosine is bound at residue Tyr-37. A 'HIGH' region motif is present at residues 42-51; sequence PTADSLHLGH. 2 residues coordinate L-tyrosine: Tyr-175 and Gln-179. Positions 235 to 239 match the 'KMSKS' region motif; that stretch reads KFGKT. Lys-238 is a binding site for ATP. Residues 357 to 414 enclose the S4 RNA-binding domain; sequence ADLQQALVNAELVPSRGQARTMISSNAVAINGEKQSDPEYAFTDADRLFGRYTLLRRG.

Belongs to the class-I aminoacyl-tRNA synthetase family. TyrS type 1 subfamily. Homodimer.

It is found in the cytoplasm. It catalyses the reaction tRNA(Tyr) + L-tyrosine + ATP = L-tyrosyl-tRNA(Tyr) + AMP + diphosphate + H(+). Its function is as follows. Catalyzes the attachment of tyrosine to tRNA(Tyr) in a two-step reaction: tyrosine is first activated by ATP to form Tyr-AMP and then transferred to the acceptor end of tRNA(Tyr). The sequence is that of Tyrosine--tRNA ligase from Yersinia enterocolitica serotype O:8 / biotype 1B (strain NCTC 13174 / 8081).